The primary structure comprises 387 residues: Transcription termination/antitermination protein NusA (387 aa).

Positions 145–209 (GQVLTGVVTR…AKGPSLLVSR (65 aa)) constitute an S1 motif domain. The KH domain maps to 312–379 (AKKARVKVTK…ARERKAREEF (68 aa)).

It belongs to the NusA family. In terms of assembly, monomer. Binds directly to the core enzyme of the DNA-dependent RNA polymerase and to nascent RNA.

Its subcellular location is the cytoplasm. In terms of biological role, participates in both transcription termination and antitermination. In Thermus thermophilus (strain ATCC 27634 / DSM 579 / HB8), this protein is Transcription termination/antitermination protein NusA.